A 280-amino-acid polypeptide reads, in one-letter code: MNDVRKILLRISYDGTRFCGWQKQVSGSRERAPSVQGELEKVAEKIHHQKIAVIGSGRTDSGVHAVGQAAHFCTPMRNILAYRFIPAFNSLLPHSIRITDAREVSSQLHARFSAVMRTYRYHLHCAPVAYAHELPYCWHIARMPDIHLLNQYAATLKGELDCTSFAAAGDKSASKSRYFYDTHFSFNHRVLTFEISANAFLWKMVRSLTGTLLHCEKKRCSVREFVRILHAKDRRLQGPPHRRMGYSYGTSVTPNTYSVQNRNTLARELASTGNARWKTY.

Residue D60 is the Nucleophile of the active site. Y119 contributes to the substrate binding site.

Belongs to the tRNA pseudouridine synthase TruA family. In terms of assembly, homodimer.

It carries out the reaction uridine(38/39/40) in tRNA = pseudouridine(38/39/40) in tRNA. Functionally, formation of pseudouridine at positions 38, 39 and 40 in the anticodon stem and loop of transfer RNAs. This Treponema pallidum (strain Nichols) protein is tRNA pseudouridine synthase A.